Consider the following 26-residue polypeptide: Aralin B chain (26 aa).

Disulfide-linked dimer of A and B chains. In terms of processing, glycosylated. High-mannose type oligosaccharides.

Lectin specific for galactose (Gal) and its derivatives. Induces apoptosis. Has cytotoxic activity against several human cancer cell lines. Is less cytotoxic to normal human cells. This chain is Aralin B chain, found in Aralia elata (Japanese angelica tree).